The primary structure comprises 480 residues: Proline--tRNA ligase (480 aa).

It belongs to the class-II aminoacyl-tRNA synthetase family. ProS type 3 subfamily. As to quaternary structure, homodimer.

It localises to the cytoplasm. It catalyses the reaction tRNA(Pro) + L-proline + ATP = L-prolyl-tRNA(Pro) + AMP + diphosphate. Catalyzes the attachment of proline to tRNA(Pro) in a two-step reaction: proline is first activated by ATP to form Pro-AMP and then transferred to the acceptor end of tRNA(Pro). The protein is Proline--tRNA ligase of Mycobacterium leprae (strain Br4923).